We begin with the raw amino-acid sequence, 294 residues long: Cytidine deaminase (294 aa).

CMP/dCMP-type deaminase domains are found at residues 48 to 168 (DEDA…FGPK) and 186 to 294 (LTGD…VLLG). 89–91 (NME) contributes to the substrate binding site. H102 is a Zn(2+) binding site. E104 serves as the catalytic Proton donor. 2 residues coordinate Zn(2+): C129 and C132.

This sequence belongs to the cytidine and deoxycytidylate deaminase family. As to quaternary structure, homodimer. Zn(2+) serves as cofactor.

It carries out the reaction cytidine + H2O + H(+) = uridine + NH4(+). The enzyme catalyses 2'-deoxycytidine + H2O + H(+) = 2'-deoxyuridine + NH4(+). Functionally, this enzyme scavenges exogenous and endogenous cytidine and 2'-deoxycytidine for UMP synthesis. The chain is Cytidine deaminase from Salmonella dublin (strain CT_02021853).